A 457-amino-acid chain; its full sequence is Serine--tRNA ligase (457 aa).

252–254 (TAE) serves as a coordination point for L-serine. ATP is bound by residues 283-285 (RKE) and valine 299. Glutamate 306 contributes to the L-serine binding site. 370 to 373 (EMVS) is an ATP binding site. L-serine is bound at residue threonine 406.

This sequence belongs to the class-II aminoacyl-tRNA synthetase family. Type-1 seryl-tRNA synthetase subfamily. As to quaternary structure, homodimer. The tRNA molecule binds across the dimer.

It localises to the cytoplasm. It catalyses the reaction tRNA(Ser) + L-serine + ATP = L-seryl-tRNA(Ser) + AMP + diphosphate + H(+). The enzyme catalyses tRNA(Sec) + L-serine + ATP = L-seryl-tRNA(Sec) + AMP + diphosphate + H(+). Its pathway is aminoacyl-tRNA biosynthesis; selenocysteinyl-tRNA(Sec) biosynthesis; L-seryl-tRNA(Sec) from L-serine and tRNA(Sec): step 1/1. In terms of biological role, catalyzes the attachment of serine to tRNA(Ser). Is also able to aminoacylate tRNA(Sec) with serine, to form the misacylated tRNA L-seryl-tRNA(Sec), which will be further converted into selenocysteinyl-tRNA(Sec). The protein is Serine--tRNA ligase of Saccharolobus islandicus (strain Y.G.57.14 / Yellowstone #1) (Sulfolobus islandicus).